The chain runs to 317 residues: Exopolysaccharide production protein ExoZ (317 aa).

Transmembrane regions (helical) follow at residues 14 to 34 (TIGAAGVDVFFVISGFIMWVI), 53 to 73 (IVPVYWLATGVMVAGALAGLF), 100 to 120 (IWPVLVQGWTLNFEMLFYAVF), 132 to 152 (LPVVSGLFLALVIAGRVVAFD), 185 to 205 (LAVGSALFACSLGGFALIGVL), 206 to 226 (GLPFDELTTGPLAVLLVIGVL), and 268 to 288 (IGLGAPATMFAAVLSGTLIGI).

Belongs to the acyltransferase 3 family.

Its subcellular location is the cell membrane. Required for the acetyl modification of the third sugar (glucose) of the octasaccharide subunit of succinoglycan (EPS I). The chain is Exopolysaccharide production protein ExoZ (exoZ) from Rhizobium meliloti (strain 1021) (Ensifer meliloti).